The chain runs to 355 residues: Histidinol-phosphate aminotransferase 2 (355 aa).

Lys-213 carries the N6-(pyridoxal phosphate)lysine modification.

Belongs to the class-II pyridoxal-phosphate-dependent aminotransferase family. Histidinol-phosphate aminotransferase subfamily. Homodimer. The cofactor is pyridoxal 5'-phosphate.

It carries out the reaction L-histidinol phosphate + 2-oxoglutarate = 3-(imidazol-4-yl)-2-oxopropyl phosphate + L-glutamate. It functions in the pathway amino-acid biosynthesis; L-histidine biosynthesis; L-histidine from 5-phospho-alpha-D-ribose 1-diphosphate: step 7/9. The polypeptide is Histidinol-phosphate aminotransferase 2 (Burkholderia lata (strain ATCC 17760 / DSM 23089 / LMG 22485 / NCIMB 9086 / R18194 / 383)).